Reading from the N-terminus, the 231-residue chain is Large ribosomal subunit protein uL1 (231 aa).

Belongs to the universal ribosomal protein uL1 family. In terms of assembly, part of the 50S ribosomal subunit.

Functionally, binds directly to 23S rRNA. The L1 stalk is quite mobile in the ribosome, and is involved in E site tRNA release. In terms of biological role, protein L1 is also a translational repressor protein, it controls the translation of the L11 operon by binding to its mRNA. This Staphylococcus epidermidis (strain ATCC 35984 / DSM 28319 / BCRC 17069 / CCUG 31568 / BM 3577 / RP62A) protein is Large ribosomal subunit protein uL1.